The following is a 432-amino-acid chain: Adenosylhomocysteinase (432 aa).

Residues 1–24 (MSAYSPLSAQLDADTDVDVESTRT) form a disordered region. The substrate site is built by Asp137 and Glu162. 163–165 (TTT) is a binding site for NAD(+). Lys192 and Asp196 together coordinate substrate. Residues Asn197, 226–231 (GYGYCG), Glu249, Asn284, 305–307 (AGH), and Asn352 each bind NAD(+).

It belongs to the adenosylhomocysteinase family. It depends on NAD(+) as a cofactor.

The protein localises to the cytoplasm. It carries out the reaction S-adenosyl-L-homocysteine + H2O = L-homocysteine + adenosine. The protein operates within amino-acid biosynthesis; L-homocysteine biosynthesis; L-homocysteine from S-adenosyl-L-homocysteine: step 1/1. Its function is as follows. May play a key role in the regulation of the intracellular concentration of adenosylhomocysteine. This is Adenosylhomocysteinase from Haloquadratum walsbyi (strain DSM 16790 / HBSQ001).